Here is a 403-residue protein sequence, read N- to C-terminus: S-adenosylmethionine synthase (403 aa).

Histidine 17 provides a ligand contact to ATP. Residue aspartate 19 participates in Mg(2+) binding. Glutamate 45 is a binding site for K(+). 2 residues coordinate L-methionine: glutamate 58 and glutamine 104. The segment at glutamine 104–threonine 114 is flexible loop. ATP is bound by residues aspartate 179 to lysine 181, lysine 250 to phenylalanine 251, aspartate 259, arginine 265 to lysine 266, alanine 282, and lysine 286. An L-methionine-binding site is contributed by aspartate 259. An L-methionine-binding site is contributed by lysine 290.

It belongs to the AdoMet synthase family. Homotetramer; dimer of dimers. The cofactor is Mg(2+). It depends on K(+) as a cofactor.

It is found in the cytoplasm. It catalyses the reaction L-methionine + ATP + H2O = S-adenosyl-L-methionine + phosphate + diphosphate. The protein operates within amino-acid biosynthesis; S-adenosyl-L-methionine biosynthesis; S-adenosyl-L-methionine from L-methionine: step 1/1. Functionally, catalyzes the formation of S-adenosylmethionine (AdoMet) from methionine and ATP. The overall synthetic reaction is composed of two sequential steps, AdoMet formation and the subsequent tripolyphosphate hydrolysis which occurs prior to release of AdoMet from the enzyme. The sequence is that of S-adenosylmethionine synthase from Mycobacterium ulcerans (strain Agy99).